Here is a 310-residue protein sequence, read N- to C-terminus: Thioredoxin reductase (310 aa).

34-41 provides a ligand contact to FAD; it reads NGMQPGGQ. An intrachain disulfide couples C135 to C138. Residue 281 to 290 participates in FAD binding; it reads DVQDKIYRQA.

Belongs to the class-II pyridine nucleotide-disulfide oxidoreductase family. In terms of assembly, homodimer. It depends on FAD as a cofactor.

The protein resides in the cytoplasm. It catalyses the reaction [thioredoxin]-dithiol + NADP(+) = [thioredoxin]-disulfide + NADPH + H(+). The protein is Thioredoxin reductase (trxB) of Rickettsia conorii (strain ATCC VR-613 / Malish 7).